A 66-amino-acid chain; its full sequence is Large ribosomal subunit protein bL32 (66 aa).

Positions 1 to 19 (MAIVPKRKTSKQRKHKRNT) are enriched in basic residues. Residues 1 to 21 (MAIVPKRKTSKQRKHKRNTHS) form a disordered region.

This sequence belongs to the bacterial ribosomal protein bL32 family.

In Mycoplasmopsis synoviae (strain 53) (Mycoplasma synoviae), this protein is Large ribosomal subunit protein bL32.